Consider the following 80-residue polypeptide: Putative ankyrin repeat protein RC0877 (80 aa).

The ANK repeat unit spans residues 6–46 (SGGIPLHAVAKNVRCTSKDIKDYEIYKLLVSYGADINARVE).

This Rickettsia conorii (strain ATCC VR-613 / Malish 7) protein is Putative ankyrin repeat protein RC0877.